The following is a 173-amino-acid chain: Transmembrane protein 240 (173 aa).

A run of 2 helical transmembrane segments spans residues 5 to 25 (ANTM…ACLM) and 90 to 110 (LMLG…MDGV). Ser169 carries the phosphoserine modification.

It localises to the synapse. It is found in the cell membrane. The sequence is that of Transmembrane protein 240 (Tmem240) from Mus musculus (Mouse).